We begin with the raw amino-acid sequence, 119 residues long: FAD-linked sulfhydryl oxidase (119 aa).

The ERV/ALR sulfhydryl oxidase domain occupies M1 to Y97. A disulfide bond links C44 and C47.

This sequence belongs to the asfivirus B119L family. In terms of assembly, interacts with A151R. Requires FAD as cofactor.

The protein resides in the host cytoplasm. The protein localises to the virion. The catalysed reaction is 2 R'C(R)SH + O2 = R'C(R)S-S(R)CR' + H2O2. In terms of biological role, FAD-dependent sulfhydryl oxidase that catalyzes the formation of disulfide bonds in viral proteins produced in the cell cytoplasm. Involved in virion maturation. This is FAD-linked sulfhydryl oxidase from Ornithodoros (relapsing fever ticks).